We begin with the raw amino-acid sequence, 209 residues long: Uracil phosphoribosyltransferase (209 aa).

Residues Arg-79, Arg-104, and 131–139 (DPMLATGGS) contribute to the 5-phospho-alpha-D-ribose 1-diphosphate site. Uracil is bound by residues Ile-194 and 199–201 (GDA). Asp-200 contributes to the 5-phospho-alpha-D-ribose 1-diphosphate binding site.

Belongs to the UPRTase family. It depends on Mg(2+) as a cofactor.

It catalyses the reaction UMP + diphosphate = 5-phospho-alpha-D-ribose 1-diphosphate + uracil. Its pathway is pyrimidine metabolism; UMP biosynthesis via salvage pathway; UMP from uracil: step 1/1. With respect to regulation, allosterically activated by GTP. Functionally, catalyzes the conversion of uracil and 5-phospho-alpha-D-ribose 1-diphosphate (PRPP) to UMP and diphosphate. This Geobacter sp. (strain M21) protein is Uracil phosphoribosyltransferase.